The primary structure comprises 616 residues: Adenylosuccinate synthetase 1 (616 aa).

Positions 1-27 (MDKQAERGQSAGPVKTPQGTQPPAHNY) are disordered. A compositionally biased stretch (polar residues) spans 17–27 (PQGTQPPAHNY). GTP-binding positions include 87-93 (GDEGKGK) and 117-119 (GHT). The active-site Proton acceptor is Asp-88. Mg(2+) is bound by residues Asp-88 and Gly-117. IMP-binding positions include 88 to 91 (DEGK), 115 to 118 (NAGH), Thr-202, Lys-216, Gln-328, Thr-343, and Lys-472. The Proton donor role is filled by His-118. A substrate-binding site is contributed by 468–474 (AVTKKPR). Residues Arg-474 and 603–605 (GNG) contribute to the GTP site.

This sequence belongs to the adenylosuccinate synthetase family. Homodimer. Mg(2+) serves as cofactor.

It is found in the cytoplasm. The enzyme catalyses IMP + L-aspartate + GTP = N(6)-(1,2-dicarboxyethyl)-AMP + GDP + phosphate + 2 H(+). It functions in the pathway purine metabolism; AMP biosynthesis via de novo pathway; AMP from IMP: step 1/2. In terms of biological role, plays an important role in the salvage pathway for purine nucleotide biosynthesis. Catalyzes the first committed step in the biosynthesis of AMP from IMP. The polypeptide is Adenylosuccinate synthetase 1 (Trypanosoma cruzi (strain CL Brener)).